Reading from the N-terminus, the 221-residue chain is ATP phosphoribosyltransferase (221 aa).

Belongs to the ATP phosphoribosyltransferase family. Short subfamily. Heteromultimer composed of HisG and HisZ subunits.

It localises to the cytoplasm. The catalysed reaction is 1-(5-phospho-beta-D-ribosyl)-ATP + diphosphate = 5-phospho-alpha-D-ribose 1-diphosphate + ATP. It functions in the pathway amino-acid biosynthesis; L-histidine biosynthesis; L-histidine from 5-phospho-alpha-D-ribose 1-diphosphate: step 1/9. Functionally, catalyzes the condensation of ATP and 5-phosphoribose 1-diphosphate to form N'-(5'-phosphoribosyl)-ATP (PR-ATP). Has a crucial role in the pathway because the rate of histidine biosynthesis seems to be controlled primarily by regulation of HisG enzymatic activity. The protein is ATP phosphoribosyltransferase of Anaeromyxobacter dehalogenans (strain 2CP-1 / ATCC BAA-258).